Consider the following 643-residue polypeptide: Threonine--tRNA ligase (643 aa).

A TGS domain is found at 1-61 (MIEIFIEDLN…NQSGNLKFLK (61 aa)). The tract at residues 246–539 (DHRKIGKDLE…LLEHYAGFLP (294 aa)) is catalytic. Residues C339, H390, and H516 each coordinate Zn(2+).

It belongs to the class-II aminoacyl-tRNA synthetase family. In terms of assembly, homodimer. The cofactor is Zn(2+).

It localises to the cytoplasm. The enzyme catalyses tRNA(Thr) + L-threonine + ATP = L-threonyl-tRNA(Thr) + AMP + diphosphate + H(+). Functionally, catalyzes the attachment of threonine to tRNA(Thr) in a two-step reaction: L-threonine is first activated by ATP to form Thr-AMP and then transferred to the acceptor end of tRNA(Thr). Also edits incorrectly charged L-seryl-tRNA(Thr). The chain is Threonine--tRNA ligase from Sulfurihydrogenibium sp. (strain YO3AOP1).